The primary structure comprises 515 residues: Bifunctional purine biosynthesis protein PurH (515 aa).

The 145-residue stretch at methionine 1–valine 145 folds into the MGS-like domain.

This sequence belongs to the PurH family.

It carries out the reaction (6R)-10-formyltetrahydrofolate + 5-amino-1-(5-phospho-beta-D-ribosyl)imidazole-4-carboxamide = 5-formamido-1-(5-phospho-D-ribosyl)imidazole-4-carboxamide + (6S)-5,6,7,8-tetrahydrofolate. The catalysed reaction is IMP + H2O = 5-formamido-1-(5-phospho-D-ribosyl)imidazole-4-carboxamide. Its pathway is purine metabolism; IMP biosynthesis via de novo pathway; 5-formamido-1-(5-phospho-D-ribosyl)imidazole-4-carboxamide from 5-amino-1-(5-phospho-D-ribosyl)imidazole-4-carboxamide (10-formyl THF route): step 1/1. It functions in the pathway purine metabolism; IMP biosynthesis via de novo pathway; IMP from 5-formamido-1-(5-phospho-D-ribosyl)imidazole-4-carboxamide: step 1/1. The sequence is that of Bifunctional purine biosynthesis protein PurH from Streptococcus pneumoniae serotype 2 (strain D39 / NCTC 7466).